A 340-amino-acid polypeptide reads, in one-letter code: Pseudaminic acid synthase (340 aa).

The AFP-like domain occupies 281–337 (SLFVIKDIQKGEALTENNIKALRPNLGLHPKFYKEILGQKASKFLKANTPLSADDIE).

This sequence belongs to the pseudaminic acid synthase family. A divalent metal cation is required as a cofactor.

It carries out the reaction 2,4-diacetamido-2,4,6-trideoxy-beta-L-altrose + phosphoenolpyruvate + H2O = pseudaminate + phosphate. Catalyzes the fifth step in the biosynthesis of pseudaminic acid, a sialic-acid-like sugar that is used to modify flagellin. Catalyzes the condensation of phosphoenolpyruvate with 2,4-diacetamido-2,4,6-trideoxy-beta-l-altropyranose, forming pseudaminic acid. The protein is Pseudaminic acid synthase (pseI) of Helicobacter pylori (strain ATCC 700392 / 26695) (Campylobacter pylori).